The sequence spans 58 residues: Metallothionein-2B (58 aa).

The interval 1 to 29 (MPDPCCNDKCECKEGECKTGCKCKSCRCP) is beta. C5, C6, C10, C12, C17, C21, C23, C26, C28, C31, C34, C38, C40, C46, C50, C54, C56, and C57 together coordinate a divalent metal cation. An alpha region spans residues 30-58 (PCDKCSSECKCTSKEECSKTCSKPCSCCP).

It belongs to the metallothionein superfamily. Type 3 family.

Its function is as follows. Binds six divalent metal ions. Known to bind copper and cadmium. The polypeptide is Metallothionein-2B (Callinectes sapidus (Blue crab)).